Here is a 151-residue protein sequence, read N- to C-terminus: UPF0178 protein Tcr_1995 (151 aa).

The interval 116–135 (RSSGVDTGGPPPLNQKDRQA) is disordered.

The protein belongs to the UPF0178 family.

This chain is UPF0178 protein Tcr_1995, found in Hydrogenovibrio crunogenus (strain DSM 25203 / XCL-2) (Thiomicrospira crunogena).